Here is a 326-residue protein sequence, read N- to C-terminus: MATTERKPLLLDFEKPLAELANRIDQIRQLAEENGVDVSGEIRKLETRAMQLREEIFSTLSPSQRLQVARHPRRPSTLDYIQAISDEWMELHGDRCGGDDPALIGGVARLGGKPVVMLGHQKGRDTKDNIARNFGMATPGGYRKAMRLMEHANKFSMPILTFIDTPGALPTVVAERQGAGEAIAYNLREMFSLDVPIICTVIGEGGSGGALGIGVGDRLLMFEHSVYTVATPEACAAILWKDASKSPQAAVALKIVSHDLKNLGIIDQILPEPTGGAHSDPLTAATTLKQALLDNLDELDRLTSQERRQLRYDKFRKIGVFTEVAH.

Residues 44–298 enclose the CoA carboxyltransferase C-terminal domain; that stretch reads KLETRAMQLR…KQALLDNLDE (255 aa).

It belongs to the AccA family. Acetyl-CoA carboxylase is a heterohexamer composed of biotin carboxyl carrier protein (AccB), biotin carboxylase (AccC) and two subunits each of ACCase subunit alpha (AccA) and ACCase subunit beta (AccD).

It localises to the cytoplasm. The catalysed reaction is N(6)-carboxybiotinyl-L-lysyl-[protein] + acetyl-CoA = N(6)-biotinyl-L-lysyl-[protein] + malonyl-CoA. Its pathway is lipid metabolism; malonyl-CoA biosynthesis; malonyl-CoA from acetyl-CoA: step 1/1. Component of the acetyl coenzyme A carboxylase (ACC) complex. First, biotin carboxylase catalyzes the carboxylation of biotin on its carrier protein (BCCP) and then the CO(2) group is transferred by the carboxyltransferase to acetyl-CoA to form malonyl-CoA. In Trichormus variabilis (strain ATCC 29413 / PCC 7937) (Anabaena variabilis), this protein is Acetyl-coenzyme A carboxylase carboxyl transferase subunit alpha.